The following is a 432-amino-acid chain: Enolase (432 aa).

The segment at 41–64 (QVPSGASTGSFEAHELRDGDPKRY) is disordered. The segment covering 52–64 (EAHELRDGDPKRY) has biased composition (basic and acidic residues). Glutamine 168 contacts (2R)-2-phosphoglycerate. Glutamate 211 serves as the catalytic Proton donor. Residues aspartate 248, glutamate 289, and aspartate 316 each contribute to the Mg(2+) site. (2R)-2-phosphoglycerate contacts are provided by lysine 341, arginine 370, serine 371, and lysine 392. Residue lysine 341 is the Proton acceptor of the active site.

The protein belongs to the enolase family. Mg(2+) serves as cofactor.

It localises to the cytoplasm. It is found in the secreted. Its subcellular location is the cell surface. The enzyme catalyses (2R)-2-phosphoglycerate = phosphoenolpyruvate + H2O. The protein operates within carbohydrate degradation; glycolysis; pyruvate from D-glyceraldehyde 3-phosphate: step 4/5. Functionally, catalyzes the reversible conversion of 2-phosphoglycerate (2-PG) into phosphoenolpyruvate (PEP). It is essential for the degradation of carbohydrates via glycolysis. The sequence is that of Enolase from Synechocystis sp. (strain ATCC 27184 / PCC 6803 / Kazusa).